A 1025-amino-acid polypeptide reads, in one-letter code: RNA cytidine acetyltransferase (1025 aa).

287–296 lines the ATP pocket; sequence GRGKSAALGL. N6-acetyllysine is present on Lys-426. Arg-470 lines the ATP pocket. The N-acetyltransferase domain maps to 558-753; the sequence is CLLPPVPPTQ…HSCIMLKTLT (196 aa). Acetyl-CoA-binding positions include 629–631 and 636–642; these read IAV and QGMGYGS. The required for localization to the nucleolus and midbody stretch occupies residues 702 to 1025; the sequence is PAERLDYLGV…KKDMKLKRKK (324 aa). Position 716 is a phosphothreonine (Thr-716). Arg-725 is an acetyl-CoA binding site. A phosphoserine mark is found at Ser-934, Ser-984, and Ser-987. The tract at residues 990–1025 is disordered; that stretch reads SDKKRKLEAKQEPKQSKKLKNRETKNKKDMKLKRKK. Positions 997 to 1018 are enriched in basic and acidic residues; sequence EAKQEPKQSKKLKNRETKNKKD.

This sequence belongs to the RNA cytidine acetyltransferase family. NAT10 subfamily. In terms of assembly, part of the small subunit (SSU) processome, composed of more than 70 proteins and the RNA chaperone small nucleolar RNA (snoRNA) U3. Interacts with THUMPD1. Interacts with SUN1 (via N-terminus). Interacts with TERT. Acetylation at Lys-426 is required to activation of rRNA transcription. May be autoacetylated; however ability to autoacetylate in vivo requires additional evidences.

It localises to the nucleus. The protein localises to the nucleolus. The protein resides in the midbody. It catalyses the reaction a cytidine in 18S rRNA + acetyl-CoA + ATP + H2O = an N(4)-acetylcytidine in 18S rRNA + ADP + phosphate + CoA + H(+). It carries out the reaction a cytidine in tRNA + acetyl-CoA + ATP + H2O = an N(4)-acetylcytidine in tRNA + ADP + phosphate + CoA + H(+). The enzyme catalyses a cytidine in mRNA + acetyl-CoA + ATP + H2O = an N(4)-acetylcytidine in mRNA + ADP + phosphate + CoA + H(+). Its activity is regulated as follows. Specifically inhibited by remodelin (4-[2-(2-cyclopentylidenehydrazinyl)-4-thiazolyl]-benzonitrile, monohydrobromide), a hydrobromide salt molecule. Remodelin can improve nuclear architecture, chromatin organization and fitness of cells from patients suffering from Hutchinson-Gilford progeria syndrome (HGPS); molecular mechanisms explaining the relation between NAT10 activity and nuclear architecture are however unclear. In terms of biological role, RNA cytidine acetyltransferase that catalyzes the formation of N(4)-acetylcytidine (ac4C) modification on mRNAs, 18S rRNA and tRNAs. Catalyzes ac4C modification of a broad range of mRNAs, enhancing mRNA stability and translation. mRNA ac4C modification is frequently present within wobble cytidine sites and promotes translation efficiency. Mediates the formation of ac4C at position 1842 in 18S rRNA. May also catalyze the formation of ac4C at position 1337 in 18S rRNA. Required for early nucleolar cleavages of precursor rRNA at sites A0, A1 and A2 during 18S rRNA synthesis. Catalyzes the formation of ac4C in serine and leucine tRNAs. Requires the tRNA-binding adapter protein THUMPD1 for full tRNA acetyltransferase activity but not for 18S rRNA acetylation. In addition to RNA acetyltransferase activity, also able to acetylate lysine residues of proteins, such as histones, microtubules, p53/TP53 and MDM2, in vitro. The relevance of the protein lysine acetyltransferase activity is however unsure in vivo. Activates telomerase activity by stimulating the transcription of TERT, and may also regulate telomerase function by affecting the balance of telomerase subunit assembly, disassembly, and localization. Involved in the regulation of centrosome duplication by acetylating CENATAC during mitosis, promoting SASS6 proteasome degradation. Part of the small subunit (SSU) processome, first precursor of the small eukaryotic ribosomal subunit. During the assembly of the SSU processome in the nucleolus, many ribosome biogenesis factors, an RNA chaperone and ribosomal proteins associate with the nascent pre-rRNA and work in concert to generate RNA folding, modifications, rearrangements and cleavage as well as targeted degradation of pre-ribosomal RNA by the RNA exosome. This is RNA cytidine acetyltransferase from Homo sapiens (Human).